Here is a 505-residue protein sequence, read N- to C-terminus: Lysine--tRNA ligase (505 aa).

The Mg(2+) site is built by Glu415 and Glu422.

Belongs to the class-II aminoacyl-tRNA synthetase family. Homodimer. It depends on Mg(2+) as a cofactor.

Its subcellular location is the cytoplasm. It carries out the reaction tRNA(Lys) + L-lysine + ATP = L-lysyl-tRNA(Lys) + AMP + diphosphate. The protein is Lysine--tRNA ligase of Pectobacterium atrosepticum (strain SCRI 1043 / ATCC BAA-672) (Erwinia carotovora subsp. atroseptica).